Reading from the N-terminus, the 426-residue chain is Nucleolar protein 12 (426 aa).

A disordered region spans residues 26–128 (QSSGPVDTLE…SKRASRPDMK (103 aa)). Residues 87-105 (LEEKYMQQVLKEDSDHESE) are compositionally biased toward basic and acidic residues. RRM domains lie at 137–251 (RTVF…SVAH) and 259–339 (RSVF…RCRN). The span at 401–415 (KARSKTGRVTKRSQA) shows a compositional bias: basic residues. Residues 401–426 (KARSKTGRVTKRSQAFKKAEANKKQK) are disordered. The span at 417-426 (KKAEANKKQK) shows a compositional bias: basic and acidic residues.

It belongs to the RRM RBM34 family.

It localises to the nucleus. The protein resides in the nucleolus. In terms of biological role, involved in pre-25S rRNA processing. In Eremothecium gossypii (strain ATCC 10895 / CBS 109.51 / FGSC 9923 / NRRL Y-1056) (Yeast), this protein is Nucleolar protein 12 (NOP12).